The following is a 179-amino-acid chain: DNA utilization protein HofN (179 aa).

The chain crosses the membrane as a helical span at residues 19-39 (LRFWLLMFVAPLLLAVGITLI).

The protein resides in the cell inner membrane. Its function is as follows. Required for the use of extracellular DNA as a nutrient. The polypeptide is DNA utilization protein HofN (hofN) (Escherichia coli (strain K12)).